The chain runs to 1102 residues: Probable DNA-directed RNA polymerase (1102 aa).

Active-site residues include Asp734, Lys804, and Asp980.

This sequence belongs to the phage and mitochondrial RNA polymerase family.

The protein resides in the mitochondrion. It catalyses the reaction RNA(n) + a ribonucleoside 5'-triphosphate = RNA(n+1) + diphosphate. In terms of biological role, DNA-dependent RNA polymerase catalyzes the transcription of DNA into RNA using the four ribonucleoside triphosphates as substrates. The chain is Probable DNA-directed RNA polymerase from Agaricus bitorquis (Pavement mushroom).